A 215-amino-acid chain; its full sequence is 3-isopropylmalate dehydratase small subunit (215 aa).

Belongs to the LeuD family. LeuD type 1 subfamily. As to quaternary structure, heterodimer of LeuC and LeuD.

It carries out the reaction (2R,3S)-3-isopropylmalate = (2S)-2-isopropylmalate. Its pathway is amino-acid biosynthesis; L-leucine biosynthesis; L-leucine from 3-methyl-2-oxobutanoate: step 2/4. Catalyzes the isomerization between 2-isopropylmalate and 3-isopropylmalate, via the formation of 2-isopropylmaleate. This Xanthomonas campestris pv. campestris (strain 8004) protein is 3-isopropylmalate dehydratase small subunit.